Consider the following 753-residue polypeptide: Elongin-A2 (753 aa).

The TFIIS N-terminal domain occupies 5–80 (STTLHAVEKL…ARWKKLVLVD (76 aa)). Disordered regions lie at residues 80 to 245 (DRNT…DWHS), 261 to 453 (ETPR…GPKT), and 477 to 497 (LSDSDSMTSQAKPEALSSPKF). 2 stretches are compositionally biased toward basic and acidic residues: residues 147 to 157 (HSREPRAERKC) and 271 to 285 (ARDRQPSDFKTDKEG). Over residues 306–317 (KRPQHSHSNKKR) the composition is skewed to basic residues. A compositionally biased stretch (basic and acidic residues) spans 333 to 348 (SPEEKEQLSNDRETQE). Residues 366–377 (EVEEVDMAEEFE) are compositionally biased toward acidic residues. Residues 409 to 428 (DKQRKANESKGTRESWDSAK) show a composition bias toward basic and acidic residues. The interval 500–659 (EAAFPGRRVN…TPYDTSRRQE (160 aa)) is activation domain. A BC-box region spans residues 528–537 (TLRQQCAQVL). The segment at 528-537 (TLRQQCAQVL) is interacting with Elongin BC complex. Residues 650–735 (TPYDTSRRQE…KTRKQAAKKV (86 aa)) are disordered. Over residues 654–663 (TSRRQEKSAG) the composition is skewed to basic and acidic residues. Low complexity predominate over residues 680 to 700 (GSSHTPSSQSSSGGGRDSSSS).

As to quaternary structure, heterotrimer of an A (ELOA, ELOA2 or ELOA3P), ELOB and ELOC subunit. As to expression, specifically expressed in testis.

The protein localises to the nucleus. Functionally, SIII, also known as elongin, is a general transcription elongation factor that increases the RNA polymerase II transcription elongation past template-encoded arresting sites. Subunit A2 is transcriptionally active but its transcription activity is not enhanced by binding to the dimeric complex of the SIII regulatory subunits B and C (elongin BC complex). The protein is Elongin-A2 of Homo sapiens (Human).